The primary structure comprises 757 residues: Xaa-Pro dipeptidyl-peptidase (757 aa).

Residues serine 348, aspartate 468, and histidine 498 each act as charge relay system in the active site.

The protein belongs to the peptidase S15 family. As to quaternary structure, homodimer.

It is found in the cytoplasm. The catalysed reaction is Hydrolyzes Xaa-Pro-|- bonds to release unblocked, N-terminal dipeptides from substrates including Ala-Pro-|-p-nitroanilide and (sequentially) Tyr-Pro-|-Phe-Pro-|-Gly-Pro-|-Ile.. Removes N-terminal dipeptides sequentially from polypeptides having unsubstituted N-termini provided that the penultimate residue is proline. In Streptococcus pneumoniae (strain P1031), this protein is Xaa-Pro dipeptidyl-peptidase.